The sequence spans 461 residues: Porin AaxA (461 aa).

Positions 1-22 (MSFRSVLLTALLSLSFTTTMQA) are cleaved as a signal peptide.

It belongs to the OprB family.

The protein localises to the cell outer membrane. In terms of biological role, facilitates L-arginine uptake, as part of the AaxABC system. The arginine uptake by the bacterium in the macrophage may be a virulence factor against the host innate immune response. This is Porin AaxA (aaxA) from Chlamydia trachomatis serovar D (strain ATCC VR-885 / DSM 19411 / UW-3/Cx).